The chain runs to 117 residues: Probable non-functional T cell receptor gamma variable (117 aa).

A signal peptide spans 1 to 20 (MRWALAVLLAFLSPASQISS). One can recognise an Ig-like domain in the interval 21–117 (NLEGRTKSVT…GFYYCATWDR (97 aa)). Cys-41 and Cys-112 form a disulfide bridge. N-linked (GlcNAc...) asparagine glycosylation is present at Asn-105.

In terms of assembly, gamma-delta TR is a heterodimer composed of a gamma and delta chain; disulfide-linked. The gamma-delta TR is associated with the transmembrane signaling CD3 coreceptor proteins following the stoichiometry: a single gamma-delta TR heterodimer associates with one CD3D-CD3E heterodimer, one CD3G-CD3E heterodimer and one CD247 homodimer forming a stable octameric structure. Upon activation, gamma-delta TR complex associates with FCER1G to initiate intracellular signaling.

The protein localises to the cell membrane. Probable non-functional open reading frame (ORF) of V region of the variable domain of T cell receptor (TR) gamma chain. Non-functional ORF generally cannot participate in the synthesis of a productive T cell receptor (TR) chain due to altered V-(D)-J or switch recombination and/or splicing site (at mRNA level) and/or conserved amino acid change (protein level). Gamma-delta TRs recognize a variety of self and foreign non-peptide antigens frequently expressed at the epithelial boundaries between the host and external environment, including endogenous lipids presented by MH-like protein CD1D and phosphoantigens presented by butyrophilin-like molecule BTN3A1. Upon antigen recognition induces rapid, innate-like immune responses involved in pathogen clearance and tissue repair. Binding of gamma-delta TR complex to antigen triggers phosphorylation of immunoreceptor tyrosine-based activation motifs (ITAMs) in the CD3 chains by the LCK and FYN kinases, allowing the recruitment, phosphorylation, and activation of ZAP70 that facilitates phosphorylation of the scaffolding proteins LCP2 and LAT. This lead to the formation of a supramolecular signalosome that recruits the phospholipase PLCG1, resulting in calcium mobilization and ERK activation, ultimately leading to T cell expansion and differentiation into effector cells. Gamma-delta TRs are produced through somatic rearrangement of a limited repertoire of variable (V), diversity (D), and joining (J) genes. The potential diversity of gamma-delta TRs is conferred by the unique ability to rearrange (D) genes in tandem and to utilize all three reading frames. The combinatorial diversity is considerably increased by the sequence exonuclease trimming and random nucleotide (N) region additions which occur during the V-(D)-J rearrangements. This is Probable non-functional T cell receptor gamma variable from Homo sapiens (Human).